Reading from the N-terminus, the 156-residue chain is EPIDERMAL PATTERNING FACTOR-like protein 6 (156 aa).

Positions 1–47 are cleaved as a signal peptide; that stretch reads MGFERTSSSLSLLSSSLPSSLQPSENTRAKFSLFYLLLLFFVLCVIA. 3 cysteine pairs are disulfide-bonded: C113-C147, C117-C123, and C120-C149.

The protein belongs to the plant cysteine rich small secretory peptide family. Epidermal patterning factor subfamily. Interacts with ERECTA. Expressed in the internal layers of the root, hypocotyl and stems, and in the midrib of developing rosette leaves. Detected in a ring of cells surrounding the vascular elements. Expressed in developing stems soon after bolting, in inflorescence stems, near the root apex and in the chalazal region of ovules. Not found in cotyledons or in stomatal precursors or stomata.

It is found in the secreted. In terms of biological role, acts primarily as positive regulator of inflorescence growth. Endodermal expression is sufficient for proper inflorescence architecture. Redundantly involved with EPFL4 in procambial development regulation. Also acts as tissue-specific regulator of epidermal pattern. Controls stomatal patterning by repressing stomatal production. TMM (AC Q9SSD1) functions to dampen or block CHAL signaling. Not processed by SDD1 (AC O64495). Acts as growth-regulatory ligand for ERECTA family receptors. The polypeptide is EPIDERMAL PATTERNING FACTOR-like protein 6 (Arabidopsis thaliana (Mouse-ear cress)).